A 628-amino-acid polypeptide reads, in one-letter code: Protein SDS23 (628 aa).

The tract at residues 1–126 (MVNPPQPRQM…NKSSSQSIAP (126 aa)) is disordered. Residues 15 to 24 (RLSTSTSSGP) are compositionally biased toward polar residues. Low complexity-rich tracts occupy residues 40-71 (QLQH…PGST) and 109-123 (SRHA…SSQS). CBS domains are found at residues 258-319 (LHPK…RFPS) and 334-392 (GSSN…SHLL). The disordered stretch occupies residues 551–609 (GRRTDPQAARNQRRRSSTSTTRSSIDSALSAEGILPSGSAIIGSSNAANTGRRGSVEVS). The segment covering 587–599 (SGSAIIGSSNAAN) has biased composition (low complexity).

This sequence belongs to the SDS23 family.

It is found in the cytoplasm. It localises to the nucleus. Involved in DNA replication and cell separation. The protein is Protein SDS23 (SDS24) of Candida albicans (strain SC5314 / ATCC MYA-2876) (Yeast).